A 155-amino-acid polypeptide reads, in one-letter code: MRCPFCGNIDTQVKDSRPAEDHVSIRRRRFCPACGGRFTTYERVQLRDLVVIKSTGKREDFDRDKLERSIRISMQKRPIDPERIDQMISGIVRRLESMGETDIGSKQIGEIVMEALARIDTVAYVRFASVYKNFQAADDFDKFVSELRPDVPGDE.

A zinc finger lies at 3 to 34; sequence CPFCGNIDTQVKDSRPAEDHVSIRRRRFCPAC. One can recognise an ATP-cone domain in the interval 49–139; sequence LVVIKSTGKR…VYKNFQAADD (91 aa).

This sequence belongs to the NrdR family. It depends on Zn(2+) as a cofactor.

Its function is as follows. Negatively regulates transcription of bacterial ribonucleotide reductase nrd genes and operons by binding to NrdR-boxes. This chain is Transcriptional repressor NrdR, found in Roseobacter denitrificans (strain ATCC 33942 / OCh 114) (Erythrobacter sp. (strain OCh 114)).